The following is a 585-amino-acid chain: tRNA 5-methylaminomethyl-2-thiouridine biosynthesis bifunctional protein MnmC (585 aa).

The tRNA (mnm(5)s(2)U34)-methyltransferase stretch occupies residues 1-236 (MTPDGLYCDP…KRERLEAVWP (236 aa)). The tract at residues 254–585 (LGAGIAGASL…SRRAGQGAAG (332 aa)) is FAD-dependent cmnm(5)s(2)U34 oxidoreductase. The tract at residues 564-585 (EAMAPGRFAERRSRRAGQGAAG) is disordered.

The protein in the N-terminal section; belongs to the methyltransferase superfamily. tRNA (mnm(5)s(2)U34)-methyltransferase family. This sequence in the C-terminal section; belongs to the DAO family. FAD serves as cofactor.

The protein resides in the cytoplasm. It catalyses the reaction 5-aminomethyl-2-thiouridine(34) in tRNA + S-adenosyl-L-methionine = 5-methylaminomethyl-2-thiouridine(34) in tRNA + S-adenosyl-L-homocysteine + H(+). Catalyzes the last two steps in the biosynthesis of 5-methylaminomethyl-2-thiouridine (mnm(5)s(2)U) at the wobble position (U34) in tRNA. Catalyzes the FAD-dependent demodification of cmnm(5)s(2)U34 to nm(5)s(2)U34, followed by the transfer of a methyl group from S-adenosyl-L-methionine to nm(5)s(2)U34, to form mnm(5)s(2)U34. The protein is tRNA 5-methylaminomethyl-2-thiouridine biosynthesis bifunctional protein MnmC of Maricaulis maris (strain MCS10) (Caulobacter maris).